We begin with the raw amino-acid sequence, 436 residues long: Glutamyl-tRNA reductase (436 aa).

Residues 49–52, Ser-109, 114–116, and Gln-120 each bind substrate; these read TCNR and EGQ. Catalysis depends on Cys-50, which acts as the Nucleophile. 198–203 lines the NADP(+) pocket; sequence GAGRMS.

The protein belongs to the glutamyl-tRNA reductase family. As to quaternary structure, homodimer.

The catalysed reaction is (S)-4-amino-5-oxopentanoate + tRNA(Glu) + NADP(+) = L-glutamyl-tRNA(Glu) + NADPH + H(+). The protein operates within porphyrin-containing compound metabolism; protoporphyrin-IX biosynthesis; 5-aminolevulinate from L-glutamyl-tRNA(Glu): step 1/2. Its pathway is porphyrin-containing compound metabolism; chlorophyll biosynthesis. Its function is as follows. Catalyzes the NADPH-dependent reduction of glutamyl-tRNA(Glu) to glutamate 1-semialdehyde (GSA). This is Glutamyl-tRNA reductase from Prochlorococcus marinus (strain MIT 9215).